We begin with the raw amino-acid sequence, 316 residues long: Pantothenate kinase (316 aa).

95-102 is an ATP binding site; that stretch reads GSVAVGKS.

It belongs to the prokaryotic pantothenate kinase family.

The protein resides in the cytoplasm. It catalyses the reaction (R)-pantothenate + ATP = (R)-4'-phosphopantothenate + ADP + H(+). It functions in the pathway cofactor biosynthesis; coenzyme A biosynthesis; CoA from (R)-pantothenate: step 1/5. This Shigella dysenteriae serotype 1 (strain Sd197) protein is Pantothenate kinase.